The chain runs to 482 residues: ATP synthase subunit beta (482 aa).

162 to 169 (GGAGVGKT) is a binding site for ATP.

Belongs to the ATPase alpha/beta chains family. F-type ATPases have 2 components, CF(1) - the catalytic core - and CF(0) - the membrane proton channel. CF(1) has five subunits: alpha(3), beta(3), gamma(1), delta(1), epsilon(1). CF(0) has four main subunits: a(1), b(1), b'(1) and c(9-12).

The protein resides in the cellular thylakoid membrane. The enzyme catalyses ATP + H2O + 4 H(+)(in) = ADP + phosphate + 5 H(+)(out). Produces ATP from ADP in the presence of a proton gradient across the membrane. The catalytic sites are hosted primarily by the beta subunits. This is ATP synthase subunit beta from Synechococcus sp. (strain PCC 6716).